Here is a 203-residue protein sequence, read N- to C-terminus: uncharacterized protein (203 aa).

An N-terminal signal peptide occupies residues 1 to 31; sequence MKKTFVKKAMLTTAAMTSAALLTFGPDAASA.

This is an uncharacterized protein from Bacillus subtilis (strain 168).